The chain runs to 409 residues: Elongation factor Tu, chloroplastic (409 aa).

A tr-type G domain is found at 10 to 214 (KPHVNIGTIG…KIDEYIPTPE (205 aa)). The segment at 19-26 (GHVDHGKT) is G1. 19–26 (GHVDHGKT) is a binding site for GTP. A Mg(2+)-binding site is contributed by Thr-26. The tract at residues 60–64 (GITIN) is G2. Residues 81 to 84 (DCPG) are G3. GTP is bound by residues 81–85 (DCPGH) and 136–139 (NKAD). Residues 136 to 139 (NKAD) are G4. Residues 174–176 (SAL) form a G5 region.

It belongs to the TRAFAC class translation factor GTPase superfamily. Classic translation factor GTPase family. EF-Tu/EF-1A subfamily.

It is found in the plastid. Its subcellular location is the chloroplast. It catalyses the reaction GTP + H2O = GDP + phosphate + H(+). Functionally, GTP hydrolase that promotes the GTP-dependent binding of aminoacyl-tRNA to the A-site of ribosomes during protein biosynthesis. The protein is Elongation factor Tu, chloroplastic (tufA) of Rhodomonas salina (Cryptomonas salina).